Consider the following 1097-residue polypeptide: Protein kinase C-like 1 (1097 aa).

REM-1 domains lie at 2–76 (STSQ…QMQR) and 106–183 (KYEC…FSIN). Positions 189–311 (RDYEIMDSTK…AKDQGSSGWL (123 aa)) constitute a C2 domain. A disordered region spans residues 304–359 (DQGSSGWLPAANLPQTGGSGAGTGSSMTGGASYGATSPLPAHNDLRPSVSPSSDAK). Positions 327 to 340 (GSSMTGGASYGATS) are enriched in low complexity. Phorbol-ester/DAG-type zinc fingers lie at residues 415-462 (GHQF…VTKC) and 480-530 (PHRF…PDFC). Disordered regions lie at residues 548–594 (KVSP…LRPA), 615–646 (YQEP…LSFE), and 724–763 (ETSH…RRKR). Residues 574-583 (PSMDSEETLH) are compositionally biased toward basic and acidic residues. Residues 730 to 741 (QQNQQVQQVQQQ) are compositionally biased toward low complexity. The span at 747-763 (QRTHSSGKSGKSKRRKR) shows a compositional bias: basic residues. The region spanning 770 to 1029 (FQFLAVLGKG…AEEIMEHPYF (260 aa)) is the Protein kinase domain. ATP contacts are provided by residues 776-784 (LGKGNFGKV) and Lys-799. Asp-895 serves as the catalytic Proton acceptor. In terms of domain architecture, AGC-kinase C-terminal spans 1030–1097 (HDVNFDDVLN…FSHISDNATI (68 aa)).

This sequence belongs to the protein kinase superfamily. AGC Ser/Thr protein kinase family. PKC subfamily.

It carries out the reaction L-seryl-[protein] + ATP = O-phospho-L-seryl-[protein] + ADP + H(+). The enzyme catalyses L-threonyl-[protein] + ATP = O-phospho-L-threonyl-[protein] + ADP + H(+). Functionally, necessary for osmotic stability. In Candida albicans (Yeast), this protein is Protein kinase C-like 1 (PKC1).